Consider the following 410-residue polypeptide: Probable serine/threonine-protein kinase PBL8 (410 aa).

Residues 1–10 (MGNCGTRDEA) show a composition bias toward basic and acidic residues. The tract at residues 1–45 (MGNCGTRDEAAVFTPQAQAQQLQKKHSRSVSDLSDPSTPRFRDDS) is disordered. Gly-2 carries N-myristoyl glycine lipidation. Residue Cys-4 is the site of S-palmitoyl cysteine attachment. Residue Thr-58 is modified to Phosphothreonine. A Protein kinase domain is found at 69-350 (FRPDYILGEG…DVVETLEPLQ (282 aa)). Residues 75 to 83 (LGEGGFGTV) and Lys-104 contribute to the ATP site. Residue Tyr-149 is modified to Phosphotyrosine. Asp-199 serves as the catalytic Proton acceptor. Phosphoserine occurs at positions 203 and 233. A phosphothreonine mark is found at Thr-234 and Thr-239. Tyr-247 is modified (phosphotyrosine).

The protein belongs to the protein kinase superfamily. Ser/Thr protein kinase family. As to quaternary structure, interacts with the Xanthomonas campestris effector XopAC/AvrAC.

The protein localises to the cell membrane. The enzyme catalyses L-seryl-[protein] + ATP = O-phospho-L-seryl-[protein] + ADP + H(+). The catalysed reaction is L-threonyl-[protein] + ATP = O-phospho-L-threonyl-[protein] + ADP + H(+). In terms of biological role, may be involved in plant defense signaling. The sequence is that of Probable serine/threonine-protein kinase PBL8 from Arabidopsis thaliana (Mouse-ear cress).